The primary structure comprises 462 residues: Sugar transporter ERD6-like 2 (462 aa).

Transmembrane regions (helical) follow at residues 23–43 (SGLL…GCAM), 70–90 (VMTL…ALVG), 96–116 (WISD…HDII), 123–143 (LFLG…IAEI), 156–176 (NQLL…FFHW), 178–198 (TLAL…FFIP), 261–281 (LIIG…AISA), 296–316 (IGTT…MLTV), 324–344 (LLMI…LSYY), 357–377 (VMLI…LGGL), 397–417 (LVTM…NFMI), and 423–443 (GTYF…WTLV).

This sequence belongs to the major facilitator superfamily. Sugar transporter (TC 2.A.1.1) family.

Its subcellular location is the membrane. In terms of biological role, sugar transporter. The sequence is that of Sugar transporter ERD6-like 2 (SUGTL3) from Arabidopsis thaliana (Mouse-ear cress).